We begin with the raw amino-acid sequence, 79 residues long: Serine protease inhibitor Kazal-type 1 (79 aa).

The signal sequence occupies residues 1-23; sequence MKVASIFLLTALVLMSLSGNSGA. The region spanning 26–79 is the Kazal-like domain; the sequence is LGREAKCTNEVNGCPRIYNPVCGTDGVTYSNECLLCMENKERQTPVLIQKSGPC. 3 disulfide bridges follow: Cys-32–Cys-61, Cys-39–Cys-58, and Cys-47–Cys-79.

It localises to the secreted. Serine protease inhibitor which exhibits anti-trypsin activity. In the pancreas, protects against trypsin-catalyzed premature activation of zymogens. In terms of biological role, in the male reproductive tract, binds to sperm heads where it modulates sperm capacitance by inhibiting calcium uptake and nitrogen oxide (NO) production. The chain is Serine protease inhibitor Kazal-type 1 (SPINK1) from Bos taurus (Bovine).